Consider the following 260-residue polypeptide: Acetylglutamate kinase (260 aa).

Substrate contacts are provided by residues 41-42 (GG), arginine 63, and asparagine 157.

Belongs to the acetylglutamate kinase family. ArgB subfamily.

It localises to the cytoplasm. The catalysed reaction is N-acetyl-L-glutamate + ATP = N-acetyl-L-glutamyl 5-phosphate + ADP. Its pathway is amino-acid biosynthesis; L-arginine biosynthesis; N(2)-acetyl-L-ornithine from L-glutamate: step 2/4. Catalyzes the ATP-dependent phosphorylation of N-acetyl-L-glutamate. The polypeptide is Acetylglutamate kinase (Acidobacterium capsulatum (strain ATCC 51196 / DSM 11244 / BCRC 80197 / JCM 7670 / NBRC 15755 / NCIMB 13165 / 161)).